The chain runs to 93 residues: Cobalt transport protein CbiN (93 aa).

The next 2 membrane-spanning stretches (helical) occupy residues L5–G25 and S62–Y82.

The protein belongs to the CbiN family. As to quaternary structure, forms an energy-coupling factor (ECF) transporter complex composed of an ATP-binding protein (A component, CbiO), a transmembrane protein (T component, CbiQ) and 2 possible substrate-capture proteins (S components, CbiM and CbiN) of unknown stoichimetry.

Its subcellular location is the cell inner membrane. Its pathway is cofactor biosynthesis; adenosylcobalamin biosynthesis. Part of the energy-coupling factor (ECF) transporter complex CbiMNOQ involved in cobalt import. This chain is Cobalt transport protein CbiN, found in Citrobacter koseri (strain ATCC BAA-895 / CDC 4225-83 / SGSC4696).